The following is a 716-amino-acid chain: FLYWCH-type zinc finger-containing protein 1 (716 aa).

The disordered stretch occupies residues M1 to K35. A Phosphoserine modification is found at S21. The FLYWCH-type 1 zinc-finger motif lies at F116–H174. K134 is covalently cross-linked (Glycyl lysine isopeptide (Lys-Gly) (interchain with G-Cter in SUMO2)). A disordered region spans residues P191–T231. Low complexity predominate over residues L195 to G204. At S261 the chain carries Phosphoserine. The FLYWCH-type 2 zinc finger occupies F273–H331. The residue at position 371 (S371) is a Phosphoserine. Positions G377–F421 are disordered. A Glycyl lysine isopeptide (Lys-Gly) (interchain with G-Cter in SUMO2) cross-link involves residue K393. The segment at F421–H479 adopts an FLYWCH-type 3 zinc-finger fold. S503 carries the phosphoserine modification. The FLYWCH-type 4 zinc-finger motif lies at F509 to H567. S591 bears the Phosphoserine mark. An FLYWCH-type 5 zinc finger spans residues F600–H658. K685 participates in a covalent cross-link: Glycyl lysine isopeptide (Lys-Gly) (interchain with G-Cter in SUMO2). A Phosphoserine modification is found at S696.

In terms of assembly, interacts with CTNNB1 (when unphosphorylated), perhaps preventing interaction of CTNNB1 with TCF4, and thereby regulating transcription activation; phosphorylation of CTNNB1 may inhibit the interaction.

It is found in the nucleus. The protein resides in the chromosome. Its subcellular location is the centromere. Functionally, transcription cofactor. Negatively regulates transcription activation by catenin beta-1 CTNNB1, perhaps acting by competing with TCF4 for CTNNB1 binding. May play a role in DNA-damage response signaling. Binds specifically to DNA sequences at peri-centromeric chromatin loci. The chain is FLYWCH-type zinc finger-containing protein 1 (FLYWCH1) from Homo sapiens (Human).